We begin with the raw amino-acid sequence, 243 residues long: Pyridoxine 5'-phosphate synthase (243 aa).

A 3-amino-2-oxopropyl phosphate-binding site is contributed by Asn9. 11–12 (DH) contacts 1-deoxy-D-xylulose 5-phosphate. Residue Arg20 coordinates 3-amino-2-oxopropyl phosphate. Residue His45 is the Proton acceptor of the active site. Residues Arg47 and His52 each coordinate 1-deoxy-D-xylulose 5-phosphate. Catalysis depends on Glu72, which acts as the Proton acceptor. Position 102 (Thr102) interacts with 1-deoxy-D-xylulose 5-phosphate. His193 serves as the catalytic Proton donor. Residues Gly194 and 215–216 (GH) contribute to the 3-amino-2-oxopropyl phosphate site.

This sequence belongs to the PNP synthase family. Homooctamer; tetramer of dimers.

Its subcellular location is the cytoplasm. The catalysed reaction is 3-amino-2-oxopropyl phosphate + 1-deoxy-D-xylulose 5-phosphate = pyridoxine 5'-phosphate + phosphate + 2 H2O + H(+). It participates in cofactor biosynthesis; pyridoxine 5'-phosphate biosynthesis; pyridoxine 5'-phosphate from D-erythrose 4-phosphate: step 5/5. Functionally, catalyzes the complicated ring closure reaction between the two acyclic compounds 1-deoxy-D-xylulose-5-phosphate (DXP) and 3-amino-2-oxopropyl phosphate (1-amino-acetone-3-phosphate or AAP) to form pyridoxine 5'-phosphate (PNP) and inorganic phosphate. This Salmonella typhi protein is Pyridoxine 5'-phosphate synthase.